We begin with the raw amino-acid sequence, 918 residues long: Importin subunit beta-2 (918 aa).

HEAT repeat units follow at residues 11–38, 43–92, 103–137, 145–181, 190–222, 235–263, 275–303, 320–413, 421–449, 461–488, 501–534, 542–577, 583–620, 628–678, 694–725, 777–814, 825–858, and 867–900; these read YVLQLATLLQNCMSPNPEIRNNAMEAME, QPEF…GGNN, YVKSNIIHGLYNSNNNLVSNVTGIVITTLFSTYYR, GLQMLYQLLELTSNGNEPSIKALSKIMEDSAQFFQLE, EALLDSFFRFISNPNFSPVIRSESVKCINTVIP, FLEIIFQLAQNDENDLVRAQICISFSFLL, DGIVQFMLHLITTVNEEKVAIEACEFLHA, KDIV…MTNI, IAFPFLREHLGSDRWFIREATILALGAMA, PALIPFLVEQLNDKWAPVRKMTCWTLSR, LIPVLEPIINTLMDKKKDVQEAAISSVAVFIENA, LFYSQLLTSFDKCLKYYKKKNLIILYDAIGRFAEKC, AMQIILPPLIEKWALLSDSDKELWPLLECLSCVASSLG, PEVY…GLGA, ILKIMLECLQDPVHEVRQSCFALLGDIVYFFN, IDMSRIILDLFTTNTQIVDSSVMENLSVTIGKMGLTHP, DSNWNKWCLSVNALDDVEEKSSAYMGFLKIINLT, and DTIHKIVTGLSSNVEANVFAQEIYTFLMNHSAQI. Positions 361 to 395 are disordered; it reads APRIVKKKEAGNGEDADDNEDDDDDDDDEDGDVDT. The span at 372 to 393 shows a compositional bias: acidic residues; it reads NGEDADDNEDDDDDDDDEDGDV.

It belongs to the importin beta family. Importin beta-2 subfamily. Interacts with Ran (GSP1); interacts specifically with the GTP-bound form of Ran (GTP-Ran), protecting it from GTP hydrolysis and nucleotide exchange. Interacts with nucleoporins NUP1, NUP100 and NUP116. Interacts with NAB2 and HRP1/NAB4; via their rg-NLS. Interacts with TFG2; via its PY-NLS.

The protein localises to the cytoplasm. The protein resides in the nucleus. Its subcellular location is the nuclear pore complex. Functions in nuclear protein import as nuclear transport receptor. Serves as receptor for arginine/glycine-rich nuclear localization signals (rg-NLS) and PY-NLS in cargo substrates. Its predominant cargo substrate seems to be mRNA-binding proteins. Required for nuclear transport of NAB2, HRP1/NAB4 and TFG2. Mediates docking of the importin/substrate complex to the nuclear pore complex (NPC) through binding to repeat-containing nucleoporins. The complex is subsequently translocated through the pore by an energy requiring, Ran-dependent mechanism. At the nucleoplasmic side of the NPC, GTP-Ran binding leads to release of the cargo. Efficient GTP-Ran-mediated substrate release requires RNA. The importin is re-exported from the nucleus to the cytoplasm where GTP hydrolysis releases Ran from importin. The directionality of nuclear import is thought to be conferred by an asymmetric distribution of the GTP- and GDP-bound forms of Ran between the cytoplasm and nucleus. The chain is Importin subunit beta-2 from Saccharomyces cerevisiae (strain ATCC 204508 / S288c) (Baker's yeast).